The chain runs to 272 residues: 3-methyl-2-oxobutanoate hydroxymethyltransferase (272 aa).

Aspartate 43 and aspartate 82 together coordinate Mg(2+). 3-methyl-2-oxobutanoate-binding positions include 43-44 (DS), aspartate 82, and lysine 112. Glutamate 114 contacts Mg(2+). Glutamate 179 functions as the Proton acceptor in the catalytic mechanism.

It belongs to the PanB family. As to quaternary structure, homodecamer; pentamer of dimers. The cofactor is Mg(2+).

The protein resides in the cytoplasm. The enzyme catalyses 3-methyl-2-oxobutanoate + (6R)-5,10-methylene-5,6,7,8-tetrahydrofolate + H2O = 2-dehydropantoate + (6S)-5,6,7,8-tetrahydrofolate. It participates in cofactor biosynthesis; (R)-pantothenate biosynthesis; (R)-pantoate from 3-methyl-2-oxobutanoate: step 1/2. Catalyzes the reversible reaction in which hydroxymethyl group from 5,10-methylenetetrahydrofolate is transferred onto alpha-ketoisovalerate to form ketopantoate. In Staphylococcus epidermidis (strain ATCC 35984 / DSM 28319 / BCRC 17069 / CCUG 31568 / BM 3577 / RP62A), this protein is 3-methyl-2-oxobutanoate hydroxymethyltransferase.